Reading from the N-terminus, the 788-residue chain is Spastin (788 aa).

Residues 1–105 (MVRTKNQSSS…PRSAGGPSSV (105 aa)) are disordered. At 1–116 (MVRTKNQSSS…KQNLYVVSFP (116 aa)) the chain is on the cytoplasmic side. The segment at 1-227 (MVRTKNQSSS…NRSGSGYSPG (227 aa)) is required for localization to punctate cytoplasmic foci. Low complexity-rich tracts occupy residues 8–48 (SSSS…SSHR) and 57–75 (ATNV…SSPD). An intramembrane region (helical) is located at residues 117 to 137 (IIFLFNVLRSLIYQLFCIFRY). Over 138–788 (LYGASTKVIY…WSSDYGDITI (651 aa)) the chain is Cytoplasmic. Residues 227 to 788 (GPGDPLLAKQ…WSSDYGDITI (562 aa)) form a sufficient for interaction with microtubules and microtubule severing region. Residues 240-315 (HRRAFEYISK…SMARDRLHFL (76 aa)) form the MIT domain. Positions 331-353 (EKQKANESREQQQKPQKAREAAD) are enriched in basic and acidic residues. The disordered stretch occupies residues 331 to 484 (EKQKANESRE…SGSGSGASTP (154 aa)). Over residues 387 to 400 (ATATTPTSSSSLAS) the composition is skewed to low complexity. 2 stretches are compositionally biased toward polar residues: residues 419 to 433 (NKSQ…SKTS) and 453 to 469 (QFSS…RTPI). The segment at 471 to 485 (NNGASGSGSGASTPV) is required for interaction with microtubules. Residue 553 to 560 (GPPGNGKT) participates in ATP binding.

It belongs to the AAA ATPase family. Spastin subfamily. Homohexamer. The homohexamer is stabilized by ATP-binding. The homohexamer may adopt a ring conformation through which microtubules pass prior to being severed. Interacts with microtubules. Interacts with atl; may be involved in microtubule dynamics.

It localises to the membrane. Its subcellular location is the cytoplasm. It is found in the cytoskeleton. The protein localises to the microtubule organizing center. The protein resides in the centrosome. It localises to the chromosome. Its subcellular location is the lipid droplet. It catalyses the reaction n ATP + n H2O + a microtubule = n ADP + n phosphate + (n+1) alpha/beta tubulin heterodimers.. Functionally, ATP-dependent microtubule severing protein. Stimulates microtubule minus-end depolymerization and poleward microtubule flux in the mitotic spindle. Regulates microtubule stability in the neuromuscular junction synapse. Involved in lipid metabolism by regulating the size and distribution of lipid droplets. Involved in axon regeneration by regulating microtubule severing. The chain is Spastin from Drosophila persimilis (Fruit fly).